Consider the following 513-residue polypeptide: Probable DNA primase large subunit (513 aa).

[4Fe-4S] cluster-binding residues include Cys-315, Cys-398, Cys-415, and Cys-457.

The protein belongs to the eukaryotic-type primase large subunit family. In terms of assembly, heterodimer of a small subunit and a large subunit. [4Fe-4S] cluster serves as cofactor.

DNA primase is the polymerase that synthesizes small RNA primers for the Okazaki fragments made during discontinuous DNA replication. The polypeptide is Probable DNA primase large subunit (Neurospora crassa (strain ATCC 24698 / 74-OR23-1A / CBS 708.71 / DSM 1257 / FGSC 987)).